The following is a 38-amino-acid chain: MKVRASVRRRTADCQVVRRKGRIYIINKKNPRLKQRQG.

Belongs to the bacterial ribosomal protein bL36 family.

The chain is Large ribosomal subunit protein bL36 from Methylacidiphilum infernorum (isolate V4) (Methylokorus infernorum (strain V4)).